The chain runs to 689 residues: ATP-dependent zinc metalloprotease FtsH 2 (689 aa).

Over 1–3 (MRK) the chain is Cytoplasmic. A helical membrane pass occupies residues 4-24 (FFRGASFYILAFIIILFIVQN). Over 25–111 (FGRPTQEIDE…SAAPPPTTPW (87 aa)) the chain is Extracellular. Residues 112–132 (FIELLPSIFMVLIFIVFWFVF) traverse the membrane as a helical segment. At 133 to 689 (MQQSQGGGNR…QDNEENRKEE (557 aa)) the chain is on the cytoplasmic side. An ATP-binding site is contributed by 205 to 212 (GPPGTGKT). Residue His427 coordinates Zn(2+). The active site involves Glu428. 2 residues coordinate Zn(2+): His431 and Asp503. Residues 661 to 673 (EELIEVSSDKEEE) show a composition bias toward basic and acidic residues. Residues 661–689 (EELIEVSSDKEEEKDNQDDQDNEENRKEE) are disordered.

In the central section; belongs to the AAA ATPase family. It in the C-terminal section; belongs to the peptidase M41 family. As to quaternary structure, homohexamer. The cofactor is Zn(2+).

It localises to the cell membrane. Its function is as follows. Acts as a processive, ATP-dependent zinc metallopeptidase for both cytoplasmic and membrane proteins. Plays a role in the quality control of integral membrane proteins. The polypeptide is ATP-dependent zinc metalloprotease FtsH 2 (Alkaliphilus metalliredigens (strain QYMF)).